A 186-amino-acid polypeptide reads, in one-letter code: uncharacterized protein (186 aa).

3 consecutive transmembrane segments (helical) span residues isoleucine 42 to leucine 62, leucine 80 to valine 100, and isoleucine 131 to leucine 151.

This sequence to U.parvum UU008, UU041 and UU042.

Its subcellular location is the cell membrane. This is an uncharacterized protein from Ureaplasma parvum serovar 3 (strain ATCC 700970).